Consider the following 268-residue polypeptide: M1-specific T cell receptor alpha chain (268 aa).

The signal sequence occupies residues 1-19 (MVLKFSVSILWIQLAWVST). The Ig-like V-type domain occupies 20 to 107 (QLLEQSPQFL…QPGDTGLYLC (88 aa)). Residues 20-109 (QLLEQSPQFL…GDTGLYLCAG (90 aa)) form a t cell receptor alpha variable 27 region. N-linked (GlcNAc...) asparagine glycosylation is found at Asn-36 and Asn-42. Cys-41 and Cys-107 are oxidised to a cystine. A CDR1 region spans residues 45 to 49 (SVFSS). The segment at 67 to 69 (VVT) is CDR2. A CDR3 region spans residues 107-118 (CAGGGSQGNLIF). Residues 110-128 (GGSQGNLIFGKGTKLSVKP) form a t cell receptor alpha joining 42 region. Residues 129–268 (IQNPDPAVYQ…LLMTLRLWSS (140 aa)) are t cell receptor alpha constant. The Ig-like C1-type domain occupies 147–235 (KSVCLFTDFD…LVEKSFETDT (89 aa)). Cys-150 and Cys-200 are joined by a disulfide. N-linked (GlcNAc...) asparagine glycans are attached at residues Asn-160, Asn-194, Asn-205, and Asn-241. The connecting peptide stretch occupies residues 222-243 (CDVKLVEKSFETDTNLNFQNLS). The chain crosses the membrane as a helical span at residues 244-266 (VIGFRILLLKVAGFNLLMTLRLW). At 267–268 (SS) the chain is on the cytoplasmic side.

As to quaternary structure, disulfide-linked heterodimer with TRBV19*01J2S7*01C*02 beta chain. The TR primarily interacts via its CDR3-beta domain with M/matrix protein 1-derived peptide (GILGFVFTL) displayed by HLA-A*02.01 in a 'peg-notch' recognition mode. The alpha-beta TR associates with the transmembrane signaling CD3 coreceptor proteins to form the TR-CD3 (TCR). The assembly of alpha-beta TR heterodimers with CD3 occurs in the endoplasmic reticulum where a single alpha-beta TR heterodimer associates with one CD3D-CD3E heterodimer, one CD3G-CD3E heterodimer and one CD247 homodimer forming a stable octameric structure. CD3D-CD3E and CD3G-CD3E heterodimers preferentially associate with TR alpha and TR beta chains (via TM domain), respectively. The association of the CD247 homodimer is the last step of TCR assembly in the endoplasmic reticulum and is required for transport to the cell surface. In terms of tissue distribution, expressed in M/matrix protein 1-specific effector and memory CD8-positive T cells readily detectable in the peripheral blood, secondary lymphoid organs and lung (primary site of infection) of IAV infected individuals.

It is found in the cell membrane. The alpha chain of TRAV27*01J42*01C*01/TRBV19*01J2S7*01C*02 alpha-beta T cell receptor (TR) clonotype that is specific for HLA-A*02:01-restricted M/matrix protein 1 immunodominant epitope GILGFVFTL of influenza A virus (IAV). Classified as a public TR clonotype, it is preferentially selected in effector memory CD8-positive T cells among multiple HLA-A*02:01 carriers and confers long-lived immunity against IAV infection. Can cross-recognize sporadically emerging IAV variants by molecular mimicry, inducing immunity toward different influenza strains. Antigen recognition initiates TR-CD3 clustering on the cell surface and intracellular activation of LCK that phosphorylates the ITAM motifs of CD3G, CD3D, CD3E and CD247 enabling the recruitment of ZAP70. In turn, ZAP70 phosphorylates LAT, which recruits numerous signaling molecules to form the LAT signalosome. The LAT signalosome propagates signal branching to three major signaling pathways, the calcium, the mitogen-activated protein kinase (MAPK) kinase and the nuclear factor NF-kappa-B (NF-kB) pathways, leading to the mobilization of transcription factors that are critical for gene expression and essential for T cell differentiation into effector/memory T cells. This chain is M1-specific T cell receptor alpha chain, found in Homo sapiens (Human).